The following is a 326-amino-acid chain: 3-dehydrosphinganine reductase TSC10A (326 aa).

The Lumenal segment spans residues 1 to 7 (MAAISPL). The chain crosses the membrane as a helical span at residues 8-28 (FLLFLIPIIPLSLLAILALIV). The Cytoplasmic segment spans residues 29–264 (RPRPIKIPIK…KAMDGIKAGN (236 aa)). NADPH-binding residues include Gly-46, Ser-48, Ser-49, Gly-50, Arg-71, Lys-75, and Asp-97. The GXSXG signature appears at 46–50 (GGSSG). Ser-174 (proton donor) is an active-site residue. Tyr-188 acts as the Proton acceptor in catalysis. Residues Tyr-188 and Lys-192 each contribute to the NADP(+) site. The active-site Lowers pKa of active site Tyr is Lys-192. A helical transmembrane segment spans residues 265–285 (FTVSCNFEGFLLSLATTGMSP). Residues 286–288 (QRS) lie on the Lumenal side of the membrane. The chain crosses the membrane as a helical span at residues 289–309 (FWLAFLEVITAGPIRLIALFF). Residues 310 to 326 (QWDWYKAIEKWSKTKTK) are Cytoplasmic-facing.

It belongs to the short-chain dehydrogenases/reductases (SDR) family. In terms of tissue distribution, expressed in roots, leaves, stems, flowers and siliques.

Its subcellular location is the endoplasmic reticulum membrane. It catalyses the reaction sphinganine + NADP(+) = 3-oxosphinganine + NADPH + H(+). The protein operates within lipid metabolism; sphingolipid metabolism. Its function is as follows. Catalyzes the reduction of 3'-oxosphinganine (3-ketodihydrosphingosine/KDS) to sphinganine (dihydrosphingosine/DHS), the second step of de novo sphingolipid biosynthesis. In plants, sphingolipids seems to play a critical role in mineral ion homeostasis, most likely through their involvement in the ion transport functionalities of membrane systems in the root. Lacks stereospecificity and can also produce L-threo-DHS in addition to D-erythro-DHS. This is 3-dehydrosphinganine reductase TSC10A (TSC10A) from Arabidopsis thaliana (Mouse-ear cress).